Consider the following 362-residue polypeptide: D-alanine--D-alanine ligase (362 aa).

The ATP-grasp domain occupies 134–345; that stretch reads KILAQRAGVP…YPDLITRLIR (212 aa). Residue 170–225 coordinates ATP; it reads GQLGTSNLFVKPSNQGSSVGITHVTDDSNYAEALAEAFKYDDKVLVEEGIVGTEVE. 3 residues coordinate Mg(2+): Asp298, Glu312, and Asn314.

This sequence belongs to the D-alanine--D-alanine ligase family. The cofactor is Mg(2+). It depends on Mn(2+) as a cofactor.

The protein resides in the cytoplasm. The enzyme catalyses 2 D-alanine + ATP = D-alanyl-D-alanine + ADP + phosphate + H(+). It participates in cell wall biogenesis; peptidoglycan biosynthesis. Cell wall formation. This chain is D-alanine--D-alanine ligase, found in Lactobacillus delbrueckii subsp. bulgaricus (strain ATCC BAA-365 / Lb-18).